We begin with the raw amino-acid sequence, 177 residues long: Transcription antitermination protein NusB (177 aa).

The interval M1 to R35 is disordered. Low complexity predominate over residues P17–K28.

The protein belongs to the NusB family.

Its function is as follows. Involved in transcription antitermination. Required for transcription of ribosomal RNA (rRNA) genes. Binds specifically to the boxA antiterminator sequence of the ribosomal RNA (rrn) operons. This is Transcription antitermination protein NusB from Acidovorax sp. (strain JS42).